The chain runs to 520 residues: GMP synthase [glutamine-hydrolyzing] (520 aa).

A Glutamine amidotransferase type-1 domain is found at 3–200 (AIAIIDFGSQ…FLDIANCKRD (198 aa)). Cys84 serves as the catalytic Nucleophile. Active-site residues include His175 and Glu177. The GMPS ATP-PPase domain occupies 201-386 (WTMKSIIEKQ…IGLSNEIIFQ (186 aa)). ATP is bound at residue 228-234 (SGGVDSS).

As to quaternary structure, homodimer.

It carries out the reaction XMP + L-glutamine + ATP + H2O = GMP + L-glutamate + AMP + diphosphate + 2 H(+). It participates in purine metabolism; GMP biosynthesis; GMP from XMP (L-Gln route): step 1/1. Functionally, catalyzes the synthesis of GMP from XMP. The protein is GMP synthase [glutamine-hydrolyzing] of Wolbachia sp. subsp. Brugia malayi (strain TRS).